A 428-amino-acid chain; its full sequence is Serine--tRNA ligase (428 aa).

235–237 (TAE) is an L-serine binding site. 266-268 (RSE) contacts ATP. Glu-289 contacts L-serine. 353-356 (EISS) provides a ligand contact to ATP. Ser-389 contributes to the L-serine binding site.

Belongs to the class-II aminoacyl-tRNA synthetase family. Type-1 seryl-tRNA synthetase subfamily. As to quaternary structure, homodimer. The tRNA molecule binds across the dimer.

The protein localises to the cytoplasm. The enzyme catalyses tRNA(Ser) + L-serine + ATP = L-seryl-tRNA(Ser) + AMP + diphosphate + H(+). It catalyses the reaction tRNA(Sec) + L-serine + ATP = L-seryl-tRNA(Sec) + AMP + diphosphate + H(+). It functions in the pathway aminoacyl-tRNA biosynthesis; selenocysteinyl-tRNA(Sec) biosynthesis; L-seryl-tRNA(Sec) from L-serine and tRNA(Sec): step 1/1. Functionally, catalyzes the attachment of serine to tRNA(Ser). Is also able to aminoacylate tRNA(Sec) with serine, to form the misacylated tRNA L-seryl-tRNA(Sec), which will be further converted into selenocysteinyl-tRNA(Sec). The protein is Serine--tRNA ligase of Psychromonas ingrahamii (strain DSM 17664 / CCUG 51855 / 37).